The sequence spans 150 residues: Ribonuclease K6 (150 aa).

A signal peptide spans 1-23 (MVLCFPLLLLVLVLWGQVCPLHA). H38 serves as the catalytic Proton acceptor. 4 cysteine pairs are disulfide-bonded: C46-C104, C60-C114, C78-C129, and C85-C92. N-linked (GlcNAc...) asparagine glycosylation is present at N55. Residues 61–65 (KPQNT) and K86 each bind substrate. N100 is a glycosylation site (N-linked (GlcNAc...) asparagine). Residue R105 participates in substrate binding. H145 acts as the Proton donor in catalysis.

This sequence belongs to the pancreatic ribonuclease family. As to quaternary structure, interacts (via N-terminus) with bacterial lipopolysaccharide (LPS).

The protein resides in the secreted. Its subcellular location is the lysosome. It is found in the cytoplasmic granule. Ribonuclease which shows a preference for the pyrimidines uridine and cytosine. Has potent antibacterial activity against a range of Gram-positive and Gram-negative bacteria, including P.aeruginosa, A.baumanii, M.luteus, S.aureus, E.faecalis, E.faecium, S.saprophyticus and E.coli. Causes loss of bacterial membrane integrity, and also promotes agglutination of Gram-negative bacteria. Probably contributes to urinary tract sterility. Bactericidal activity is independent of RNase activity. The sequence is that of Ribonuclease K6 (RNASE6) from Aotus trivirgatus (Three-striped night monkey).